Reading from the N-terminus, the 447-residue chain is UDP-glycosyltransferase 79B9 (447 aa).

UDP-alpha-D-glucose-binding positions include serine 260, 319-321 (VQQ), 336-344 (HCGFGSMWE), and 358-361 (LCDQ).

It belongs to the UDP-glycosyltransferase family.

The protein is UDP-glycosyltransferase 79B9 (UGT79B9) of Arabidopsis thaliana (Mouse-ear cress).